The following is a 1201-amino-acid chain: MDKLPPSMRKRLYSLPQQVGAKAWIMDEEEDGEEEGAGGRQDPSRRSIRLRPLPSPSPSVAAGCSESRGAALGATESEGPGRSAGKSSTNGDCRRFRGSLASLGSRGGGSGGAGGGSSLGHLHDSAEERRLIAAEGDASPGEDRTPPGLATEPERPATAAQPAASPPPQQPPQPASASCEQPSADTAIKVEGGAAASDQILPEAEVRLGQSGFMQRQFGAMLQPGVNKFSLRMFGSQKAVEREQERVKSAGFWIIHPYSDFRFYWDLTMLLLMVGNLIIIPVGITFFKDENTTPWIVFNVVSDTFFLIDLVLNFRTGIVVEDNTEIILDPQRIKMKYLKSWFVVDFISSIPVDYIFLIVETRIDSEVYKTARALRIVRFTKILSLLRLLRLSRLIRYIHQWEEIFHMTYDLASAVVRIVNLIGMMLLLCHWDGCLQFLVPMLQDFPHDCWVSINGMVNNSWGKQYSYALFKAMSHMLCIGYGRQAPVGMSDVWLTMLSMIVGATCYAMFIGHATALIQSLDSSRRQYQEKYKQVEQYMSFHKLPPDTRQRIHDYYEHRYQGKMFDEESILGELSEPLREEIINFNCRKLVASMPLFANADPNFVTSMLTKLRFEVFQPGDYIIREGTIGKKMYFIQHGVVSVLTKGNKETKLADGSYFGEICLLTRGRRTASVRADTYCRLYSLSVDNFNEVLEEYPMMRRAFETVALDRLDRIGKKNSILLHKVQHDLNSGVFNYQENEIIQQIVRHDREMAHCAHRVQAAASATPTPTPVIWTPLIQAPLQAAAATTSVAIALTHHPRLPAAIFRPPPGPGLGNLGAGQTPRHPRRLQSLIPSALGSASPASSPSQVDTPSSSSFHIQQLAGFSAPPGLSPLLPSSSSSPPPGACGSPPAPTPSTSTAAAASTTGFGHFHKALGGSLSSSDSPLLTPLQPGARSPQAAQPPPPLPGARGGLGLLEHFLPPPPSSRSPSSSPGQLGQPPGELSLGLAAGPSSTPETPPRPERPSFMAGASGGASPVAFTPRGGLSPPGHSPGPPRTFPSAPPRASGSHGSLLLPPASSPPPPQVPQRRGTPPLTPGRLTQDLKLISASQPALPQDGAQTLRRASPHSSGESVAAFSLYPRAGGGSGSSGGLGPPGRPYGAIPGQHVTLPRKTSSGSLPPPLSLFGARAASSGGPPLTTAAPQREPGARSEPVRSKLPSNL.

The Cytoplasmic segment spans residues 1-263; the sequence is MDKLPPSMRK…IIHPYSDFRF (263 aa). The disordered stretch occupies residues 24-183; sequence WIMDEEEDGE…PASASCEQPS (160 aa). The segment covering 26-36 has biased composition (acidic residues); it reads MDEEEDGEEEG. A compositionally biased stretch (gly residues) spans 105–118; it reads SRGGGSGGAGGGSS. The span at 121 to 132 shows a compositional bias: basic and acidic residues; that stretch reads HLHDSAEERRLI. Ser-139 bears the Phosphoserine mark. A compositionally biased stretch (pro residues) spans 164–174; the sequence is ASPPPQQPPQP. The interval 209–260 is involved in subunit assembly; that stretch reads GQSGFMQRQFGAMLQPGVNKFSLRMFGSQKAVEREQERVKSAGFWIIHPYSD. Residues 264-286 form a helical membrane-spanning segment; that stretch reads YWDLTMLLLMVGNLIIIPVGITF. Residues 287 to 293 are Extracellular-facing; the sequence is FKDENTT. Residues 294–314 traverse the membrane as a helical segment; sequence PWIVFNVVSDTFFLIDLVLNF. Residues 315 to 336 are Cytoplasmic-facing; it reads RTGIVVEDNTEIILDPQRIKMK. A helical transmembrane segment spans residues 337 to 359; it reads YLKSWFVVDFISSIPVDYIFLIV. The Extracellular portion of the chain corresponds to 360–378; that stretch reads ETRIDSEVYKTARALRIVR. Residues 379–399 form a helical; Voltage-sensor membrane-spanning segment; that stretch reads FTKILSLLRLLRLSRLIRYIH. Residues 400–413 lie on the Cytoplasmic side of the membrane; the sequence is QWEEIFHMTYDLAS. The chain crosses the membrane as a helical span at residues 414 to 436; the sequence is AVVRIVNLIGMMLLLCHWDGCLQ. Residues 437–464 are Extracellular-facing; the sequence is FLVPMLQDFPHDCWVSINGMVNNSWGKQ. Asn-458 carries N-linked (GlcNAc...) asparagine glycosylation. An intramembrane region (pore-forming) is located at residues 465–486; sequence YSYALFKAMSHMLCIGYGRQAP. Residues 487 to 491 are Extracellular-facing; it reads VGMSD. A helical membrane pass occupies residues 492–517; sequence VWLTMLSMIVGATCYAMFIGHATALI. At 518-1201 the chain is on the cytoplasmic side; the sequence is QSLDSSRRQY…PVRSKLPSNL (684 aa). 3',5'-cyclic GMP-binding residues include Tyr-559, Lys-562, Phe-564, and Glu-566. 3',5'-cyclic AMP is bound by residues Gly-659, Glu-660, Cys-662, Arg-669, Thr-670, Val-673, and Arg-710. Disordered stretches follow at residues 804 to 902 and 914 to 1201; these read AIFR…TAAA and ALGG…PSNL. 2 stretches are compositionally biased toward low complexity: residues 831 to 856 and 866 to 880; these read SLIP…SSSS and SAPP…SSSS. Pro residues predominate over residues 881–894; it reads SPPPGACGSPPAPT. Low complexity-rich tracts occupy residues 915 to 939 and 967 to 995; these read LGGS…SPQA and RSPS…SSTP. Residues 1029-1042 are compositionally biased toward pro residues; sequence GHSPGPPRTFPSAP. Positions 1045–1056 are enriched in low complexity; the sequence is ASGSHGSLLLPP. Phosphoserine is present on residues Ser-1105 and Ser-1108. A compositionally biased stretch (gly residues) spans 1122-1134; the sequence is AGGGSGSSGGLGP.

This sequence belongs to the potassium channel HCN family. In terms of assembly, homotetramer. The potassium channel is composed of a homo- or heterotetrameric complex of pore-forming subunits. Interacts with PEX5L with a 4:4 HCN4:PEX5L stoichiometry; reduces the effects of cAMP on the voltage-dependence and rate of activation. Interacts with IRAG1; regulates HCN4 channel activity. Interacts with IRAG2; regulates HCN4 channel activity. In terms of processing, S-palmitoylated. In terms of tissue distribution, detected in a subset of elongated cells in taste buds.

Its subcellular location is the cell membrane. It catalyses the reaction K(+)(in) = K(+)(out). The enzyme catalyses Na(+)(in) = Na(+)(out). Its activity is regulated as follows. Activated by cAMP, and to a lesser extent by cGMP and cCMP. cAMP binding causes a conformation change that leads to the assembly of an active tetramer and channel opening. Binding of cAMP removes a tonic inhibition conferred by cyclic nucleotide-binding domain (CNBD) on channel opening. Cyclic dinucleotides can modulate HCN4 channel; cyclic dinucleotides acting as potent antagonists of cAMP. Inhibited by extracellular Cs(+) ions. Auxiliary subunits can also regulate HCN4 channel. IRAG1 causes a gain-of-function by shifting HCN4 activation to more depolarized membrane potentials in the absence of cAMP. In contrast, IRAG2 causes a loss-of-function by inhibiting cAMP-dependent potentiation of HCN4 activation. In terms of biological role, hyperpolarization-activated ion channel that are permeable to Na(+) and K(+) ions with very slow activation and inactivation. Exhibits higher selectivity for K(+) over Na(+) ions. Contributes to the native pacemaker currents in heart (If) that regulate the rhythm of heart beat. Contributes to the native pacemaker currents in neurons (Ih). May mediate responses to sour stimuli. The protein is Potassium/sodium hyperpolarization-activated cyclic nucleotide-gated channel 4 (Hcn4) of Mus musculus (Mouse).